We begin with the raw amino-acid sequence, 208 residues long: FMRFamide-like neuropeptide 18 (208 aa).

The N-terminal stretch at 1–21 is a signal peptide; the sequence is MQRWSGVLLISLCCLLRGALA. Residues 22–83 constitute a propeptide that is removed on maturation; that stretch reads YTEPIYEIVE…VWEKRESSVQ (62 aa). Phenylalanine amide is present on Phe-93. The propeptide occupies 97–101; it reads AYFDE. Phe-111 bears the Phenylalanine amide mark. A propeptide spanning residues 115 to 119 is cleaved from the precursor; it reads SYFDE. Phe-129 carries the phenylalanine amide modification. Residues 133 to 137 constitute a propeptide that is removed on maturation; that stretch reads DVPMD. At Phe-147 the chain carries Phenylalanine amide. A propeptide spanning residues 151 to 158 is cleaved from the precursor; it reads DYMADSFD. Phe-169 and Phe-180 each carry phenylalanine amide. Positions 184–195 are excised as a propeptide; that stretch reads SDLEEHYAGVLL. Phe-205 carries the phenylalanine amide modification.

Belongs to the FARP (FMRFamide related peptide) family. Post-translationally, may be processed by convertase egl-3. Expressed in head neurons and weakly in ventral nerve cord. Expressed in the interneurons AVA, AIY and RIG, the motor neuron RIM and the pharyngeal neurons M2 and M3. EMPGVLRF-amide: Expressed in cholinergic pharyngeal motoneurons M2 and M3.

The protein resides in the secreted. Functionally, FMRFamide-like neuropeptides. Ligand to G-protein coupled receptor npr-1. Involved in modulating locomotion quiescence during the sleep-like state called lethargus which occurs during molting between larval and adult stages, acting via npr-1. Together with flp-1, plays a homeostatic role by acting on the GABAergic neural transmission at neuromuscular junctions to prevent overexcitation of the locomotor circuit. Plays a role in the navigational capacity of sperm and the targeting of sperm derived from males to the fertilization site in the uterus of hermaphrodites. Its function is as follows. SVPGVLRF-amide: Excites muscle tension. Activates the G-protein coupled receptor npr-1 more effectively than other flp-18 peptides. Inhibits the activity of dissected pharyngeal myogenic muscle system. The protein is FMRFamide-like neuropeptide 18 of Caenorhabditis elegans.